The following is a 749-amino-acid chain: Formate acetyltransferase (749 aa).

Residues 3–619 (ETNKNHATAW…KTGNTPDGRK (617 aa)) form the PFL domain. Cysteine 413 serves as the catalytic S-acetylcysteine intermediate. Cysteine 414 functions as the Cysteine radical intermediate in the catalytic mechanism. In terms of domain architecture, Glycine radical spans 626–749 (PGANPMHGRD…VISRTFHESM (124 aa)). Residue glycine 724 is modified to Glycine radical.

Belongs to the glycyl radical enzyme (GRE) family. PFL subfamily. In terms of assembly, homodimer.

The protein localises to the cytoplasm. It catalyses the reaction formate + acetyl-CoA = pyruvate + CoA. The protein operates within fermentation; pyruvate fermentation; formate from pyruvate: step 1/1. Catalyzes the conversion of pyruvate to formate and acetyl-CoA. This is Formate acetyltransferase (pflB) from Staphylococcus aureus (strain USA300).